The following is a 372-amino-acid chain: Glutamate 5-kinase (372 aa).

K14 contributes to the ATP binding site. S54, D141, and N153 together coordinate substrate. 173-174 (TD) provides a ligand contact to ATP. The 79-residue stretch at 280 to 358 (RGTLVLDEGA…DAIVGVLGYM (79 aa)) folds into the PUA domain.

The protein belongs to the glutamate 5-kinase family.

The protein resides in the cytoplasm. It catalyses the reaction L-glutamate + ATP = L-glutamyl 5-phosphate + ADP. It participates in amino-acid biosynthesis; L-proline biosynthesis; L-glutamate 5-semialdehyde from L-glutamate: step 1/2. Its function is as follows. Catalyzes the transfer of a phosphate group to glutamate to form L-glutamate 5-phosphate. In Pseudomonas fluorescens (strain ATCC BAA-477 / NRRL B-23932 / Pf-5), this protein is Glutamate 5-kinase.